A 156-amino-acid chain; its full sequence is Small ribosomal subunit protein uS7 (156 aa).

This sequence belongs to the universal ribosomal protein uS7 family. Part of the 30S ribosomal subunit. Contacts proteins S9 and S11.

Functionally, one of the primary rRNA binding proteins, it binds directly to 16S rRNA where it nucleates assembly of the head domain of the 30S subunit. Is located at the subunit interface close to the decoding center, probably blocks exit of the E-site tRNA. The chain is Small ribosomal subunit protein uS7 from Streptococcus pneumoniae (strain Taiwan19F-14).